Here is a 224-residue protein sequence, read N- to C-terminus: Ribonuclease 3 (224 aa).

One can recognise an RNase III domain in the interval 5–127 (LERLCRRLNY…ILAAIYLDGG (123 aa)). Glu-40 is a Mg(2+) binding site. Asp-44 is an active-site residue. Asp-113 and Glu-116 together coordinate Mg(2+). Glu-116 is a catalytic residue. Residues 154–224 (DAKTQLQEFL…AKAMLEQLQG (71 aa)) enclose the DRBM domain.

Belongs to the ribonuclease III family. Homodimer. Mg(2+) serves as cofactor.

It is found in the cytoplasm. The catalysed reaction is Endonucleolytic cleavage to 5'-phosphomonoester.. Its function is as follows. Digests double-stranded RNA. Involved in the processing of primary rRNA transcript to yield the immediate precursors to the large and small rRNAs (23S and 16S). Processes some mRNAs, and tRNAs when they are encoded in the rRNA operon. Processes pre-crRNA and tracrRNA of type II CRISPR loci if present in the organism. This chain is Ribonuclease 3, found in Legionella pneumophila (strain Lens).